The primary structure comprises 235 residues: Purine nucleoside phosphorylase DeoD-type (235 aa).

An a purine D-ribonucleoside-binding site is contributed by His4. Residues Gly20, Arg24, Arg43, and 87-90 (RVGT) each bind phosphate. A purine D-ribonucleoside contacts are provided by residues 179–181 (EME) and 203–204 (SN).

Belongs to the PNP/UDP phosphorylase family. As to quaternary structure, homohexamer; trimer of homodimers.

It catalyses the reaction a purine D-ribonucleoside + phosphate = a purine nucleobase + alpha-D-ribose 1-phosphate. The enzyme catalyses a purine 2'-deoxy-D-ribonucleoside + phosphate = a purine nucleobase + 2-deoxy-alpha-D-ribose 1-phosphate. In terms of biological role, catalyzes the reversible phosphorolytic breakdown of the N-glycosidic bond in the beta-(deoxy)ribonucleoside molecules, with the formation of the corresponding free purine bases and pentose-1-phosphate. The polypeptide is Purine nucleoside phosphorylase DeoD-type (Levilactobacillus brevis (strain ATCC 367 / BCRC 12310 / CIP 105137 / JCM 1170 / LMG 11437 / NCIMB 947 / NCTC 947) (Lactobacillus brevis)).